A 131-amino-acid polypeptide reads, in one-letter code: UPF0102 protein RPD_0400 (131 aa).

Belongs to the UPF0102 family.

The protein is UPF0102 protein RPD_0400 of Rhodopseudomonas palustris (strain BisB5).